A 750-amino-acid chain; its full sequence is 3-isopropylmalate dehydratase (750 aa).

[4Fe-4S] cluster contacts are provided by cysteine 353, cysteine 413, and cysteine 416. Residues 492 to 524 form a disordered region; it reads KYDGSPEVFKSTQDTTPAVKPPQPASDSSSSGG.

This sequence belongs to the aconitase/IPM isomerase family. In terms of assembly, monomer. The cofactor is [4Fe-4S] cluster.

The catalysed reaction is (2R,3S)-3-isopropylmalate = (2S)-2-isopropylmalate. Its pathway is amino-acid biosynthesis; L-leucine biosynthesis; L-leucine from 3-methyl-2-oxobutanoate: step 2/4. Its function is as follows. Catalyzes the isomerization between 2-isopropylmalate and 3-isopropylmalate, via the formation of 2-isopropylmaleate. The sequence is that of 3-isopropylmalate dehydratase (LEU1) from Rhizopus niveus.